The primary structure comprises 109 residues: uncharacterized protein (109 aa).

Its subcellular location is the mitochondrion. This is an uncharacterized protein from Marchantia polymorpha (Common liverwort).